A 405-amino-acid polypeptide reads, in one-letter code: Argininosuccinate synthase (405 aa).

Residues 10–18 (AYSGGLDTS) and alanine 37 contribute to the ATP site. L-citrulline is bound by residues tyrosine 88 and serine 93. ATP is bound at residue glycine 118. L-aspartate-binding residues include threonine 120, asparagine 124, and aspartate 125. Asparagine 124 lines the L-citrulline pocket. Residues arginine 128, serine 179, serine 188, glutamate 264, and tyrosine 276 each coordinate L-citrulline.

This sequence belongs to the argininosuccinate synthase family. Type 1 subfamily. As to quaternary structure, homotetramer.

It localises to the cytoplasm. The enzyme catalyses L-citrulline + L-aspartate + ATP = 2-(N(omega)-L-arginino)succinate + AMP + diphosphate + H(+). The protein operates within amino-acid biosynthesis; L-arginine biosynthesis; L-arginine from L-ornithine and carbamoyl phosphate: step 2/3. This is Argininosuccinate synthase from Pseudomonas aeruginosa (strain LESB58).